A 183-amino-acid polypeptide reads, in one-letter code: UPF0098 protein YbcL (183 aa).

A signal peptide spans 1 to 21 (MKTLIVSTVLAFITFSAQAAA). Cysteines 46 and 129 form a disulfide.

This sequence belongs to the UPF0098 family. As to quaternary structure, homodimer.

The protein resides in the periplasm. This Escherichia coli (strain K12) protein is UPF0098 protein YbcL (ybcL).